We begin with the raw amino-acid sequence, 176 residues long: Tubulin polymerization-promoting protein family member 3 (176 aa).

The interval threonine 132–arginine 151 is disordered. Basic and acidic residues predominate over residues serine 134 to arginine 151.

Belongs to the TPPP family.

It localises to the cytoplasm. It is found in the cytoskeleton. Regulator of microtubule dynamic that has microtubule bundling activity. This Xenopus laevis (African clawed frog) protein is Tubulin polymerization-promoting protein family member 3 (tppp3).